The chain runs to 424 residues: Tyrosine--tRNA ligase (424 aa).

Y37 contacts L-tyrosine. Residues 42 to 51 (PTADSLHLGH) carry the 'HIGH' region motif. 2 residues coordinate L-tyrosine: Y175 and Q179. Residues 235–239 (KFGKT) carry the 'KMSKS' region motif. An ATP-binding site is contributed by K238. Residues 357-414 (ADLQQALVNAELVPSRGQARTMIGSNAVAINGEKQADPEYVFTDADRLFGRYTLLRRG) form the S4 RNA-binding domain.

It belongs to the class-I aminoacyl-tRNA synthetase family. TyrS type 1 subfamily. In terms of assembly, homodimer.

It is found in the cytoplasm. It catalyses the reaction tRNA(Tyr) + L-tyrosine + ATP = L-tyrosyl-tRNA(Tyr) + AMP + diphosphate + H(+). In terms of biological role, catalyzes the attachment of tyrosine to tRNA(Tyr) in a two-step reaction: tyrosine is first activated by ATP to form Tyr-AMP and then transferred to the acceptor end of tRNA(Tyr). In Yersinia pseudotuberculosis serotype O:1b (strain IP 31758), this protein is Tyrosine--tRNA ligase.